A 567-amino-acid chain; its full sequence is Urease subunit alpha (567 aa).

The 439-residue stretch at 129-567 folds into the Urease domain; that stretch reads GGIDAHIHFI…LPLAQRYFLF (439 aa). His134, His136, and Lys217 together coordinate Ni(2+). The residue at position 217 (Lys217) is an N6-carboxylysine. His219 is a binding site for substrate. The Ni(2+) site is built by His246 and His272. The active-site Proton donor is His320. Position 360 (Asp360) interacts with Ni(2+).

The protein belongs to the metallo-dependent hydrolases superfamily. Urease alpha subunit family. As to quaternary structure, heterotrimer of UreA (gamma), UreB (beta) and UreC (alpha) subunits. Three heterotrimers associate to form the active enzyme. Requires Ni cation as cofactor. In terms of processing, carboxylation allows a single lysine to coordinate two nickel ions.

The protein resides in the cytoplasm. The catalysed reaction is urea + 2 H2O + H(+) = hydrogencarbonate + 2 NH4(+). The protein operates within nitrogen metabolism; urea degradation; CO(2) and NH(3) from urea (urease route): step 1/1. The protein is Urease subunit alpha of Hahella chejuensis (strain KCTC 2396).